The sequence spans 317 residues: Ribosome production factor 2 homolog (317 aa).

The region spanning lysine 28–aspartate 240 is the Brix domain. The segment at methionine 287–glutamate 317 is disordered. A phosphoserine mark is found at serine 293, serine 300, serine 313, and serine 316. The segment covering glutamate 296 to glutamate 317 has biased composition (acidic residues).

It belongs to the RPF2 family. As to quaternary structure, component of a hexameric 5S RNP precursor complex, composed of 5S RNA, rrs1, rpf2, rpl5a/rpl5b, rpl11a/rpl11b and syo1; this complex acts as a precursor for ribosome assembly.

It localises to the nucleus. Its subcellular location is the nucleolus. The polypeptide is Ribosome production factor 2 homolog (Schizosaccharomyces pombe (strain 972 / ATCC 24843) (Fission yeast)).